The primary structure comprises 500 residues: Potassium/proton antiporter CemA (500 aa).

A helical membrane pass occupies residues Leu-129–Phe-149. The tract at residues His-204 to Asp-354 is insert. Helical transmembrane passes span Ile-378–Leu-398, Ile-425–Phe-445, and Ile-461–Phe-481.

The protein belongs to the CemA family.

The protein resides in the plastid. The protein localises to the chloroplast inner membrane. The enzyme catalyses K(+)(in) + H(+)(out) = K(+)(out) + H(+)(in). In terms of biological role, contributes to K(+)/H(+) antiport activity by supporting proton efflux to control proton extrusion and homeostasis in chloroplasts in a light-dependent manner to modulate photosynthesis. Prevents excessive induction of non-photochemical quenching (NPQ) under continuous-light conditions. Indirectly promotes efficient inorganic carbon uptake into chloroplasts. The chain is Potassium/proton antiporter CemA from Chlamydomonas reinhardtii (Chlamydomonas smithii).